Consider the following 118-residue polypeptide: Phospholipase A2 'basic' (118 aa).

Disulfide bonds link C11–C70, C26–C117, C28–C44, C43–C98, C50–C91, C59–C84, and C77–C89. Ca(2+)-binding residues include Y27, G29, and G31. Residue H47 is part of the active site. D48 lines the Ca(2+) pocket. Residues 52 to 69 carry the Coagulation factor Xa binding motif motif; the sequence is EKAGKMGCWPYLTLYKYK. D92 is an active-site residue.

This sequence belongs to the phospholipase A2 family. Group I subfamily. D49 sub-subfamily. The cofactor is Ca(2+). As to expression, expressed by the venom gland.

It localises to the secreted. The enzyme catalyses a 1,2-diacyl-sn-glycero-3-phosphocholine + H2O = a 1-acyl-sn-glycero-3-phosphocholine + a fatty acid + H(+). Snake venom phospholipase A2 (PLA2) that shows strong anticoagulant activity. Binds directly with the coagulation factor FXa (F10) and blocks the formation of the prothombinase complex. Acts by a nonenzymatic mechanism. Also inhibits the complex composed of tissue factor (F3) and coagulation factor VIIa (F7) (TF-VIIa complex) by both enzymatic and nonenzymatic mechanisms. PLA2 catalyzes the calcium-dependent hydrolysis of the 2-acyl groups in 3-sn-phosphoglycerides. In Naja nigricollis (Black-necked spitting cobra), this protein is Phospholipase A2 'basic'.